Reading from the N-terminus, the 182-residue chain is Large ribosomal subunit protein uL16 (182 aa).

This sequence belongs to the universal ribosomal protein uL16 family.

The sequence is that of Large ribosomal subunit protein uL16 from Pyrobaculum islandicum (strain DSM 4184 / JCM 9189 / GEO3).